The primary structure comprises 327 residues: 2-keto-3-deoxygluconate permease (327 aa).

10 helical membrane passes run 10–30 (IPGG…TFSP), 42–62 (GMIT…GASI), 73–93 (KSGT…AIAS), 95–115 (IIPE…LALV), 139–159 (AGAF…IILG), 163–183 (IASF…VGFA), 199–219 (VQTL…LTVI), 224–244 (LLGI…LIIA), 254–274 (TAGI…VLIA), and 289–309 (SLVA…TSIW).

The protein belongs to the KdgT transporter family.

It localises to the cell inner membrane. The enzyme catalyses 2-dehydro-3-deoxy-D-gluconate(in) + H(+)(in) = 2-dehydro-3-deoxy-D-gluconate(out) + H(+)(out). In terms of biological role, catalyzes the proton-dependent uptake of 2-keto-3-deoxygluconate (KDG) into the cell. This is 2-keto-3-deoxygluconate permease from Escherichia coli O7:K1 (strain IAI39 / ExPEC).